We begin with the raw amino-acid sequence, 201 residues long: dCTP deaminase, dUMP-forming (201 aa).

DCTP is bound by residues 101–106 (KSSLGR), D119, 127–129 (TLE), Q148, Y162, and Q174. The active-site Proton donor/acceptor is E129. Over residues 166 to 183 (EYSSRYQGQRGPTASRSF) the composition is skewed to polar residues. Residues 166 to 201 (EYSSRYQGQRGPTASRSFLNFHRTDVSGTEAGRSSS) are disordered.

Belongs to the dCTP deaminase family. As to quaternary structure, homotrimer.

The catalysed reaction is dCTP + 2 H2O = dUMP + NH4(+) + diphosphate. It participates in pyrimidine metabolism; dUMP biosynthesis; dUMP from dCTP: step 1/1. Bifunctional enzyme that catalyzes both the deamination of dCTP to dUTP and the hydrolysis of dUTP to dUMP without releasing the toxic dUTP intermediate. In Leifsonia xyli subsp. xyli (strain CTCB07), this protein is dCTP deaminase, dUMP-forming.